A 501-amino-acid polypeptide reads, in one-letter code: Probable cytochrome P450 6t3 (501 aa).

Heme is bound at residue Cys-444.

It belongs to the cytochrome P450 family. Heme serves as cofactor.

The protein localises to the endoplasmic reticulum membrane. The protein resides in the microsome membrane. May be involved in the metabolism of insect hormones and in the breakdown of synthetic insecticides. The sequence is that of Probable cytochrome P450 6t3 (Cyp6t3) from Drosophila melanogaster (Fruit fly).